The primary structure comprises 962 residues: MGKPTLLEPGHLYNVPAEHKNDVPIHYIITWIKQRLPEFGGAIPTSLADRVLIIKSRTGSGKSTALPVHVFRILRNENTHSFQKYLGRSVICTQPRVLTAVTLAKDIGASTHYPDMILGQTVGYQTKPLTEKPNRGLIYATAGVLLAQLHTMTDDEIASRYAFMIIDEAHERALGIDLMLMYIKSMLERMLQRGSIGALRIPFVILTSATIDTHKYSTYFGIGKENIILVEGRQYGVETHWPLYNTNNYIKTACETALTIHKENIHDRPTEADILIFMPGMAEIRFLSMLLNNANMDLAKEKLPLMLILPIDSEAIAQENEAYLGLKAEIKNLWVKNPLTAKVEKPLRRVIVSTVVAETGLTIETLKYVIDPGWNRSIETYYPEWAGGLITRPAAQSRIEQRKGRVGRVFPGHFYPLYTKHVFEQIPAQQYPEIITEGPGAIFLSIVVETIKKNKEGVFKAEEIDMLDPPPTDALASAIERAIVAGLLTRGEKGLQLTQLGDIASRFSFLSIEEARMCFSGYFWQAAISDIATILAVVSVADKKLTNLLDSKQRNGAMLAEAVLAGIPPFLQNIDNAYTNIHLLLADDLLEGLFIFEGFQHAIVYFINNKVNNVAKHLREWCEKKMLKYSSMVQILARREDILNELAIVGLNPFHQWQNRLASANAETFLKRVCTLKQCMYEAYRLNCFCYDEHRLLYTGRNGIHFSYHDAVIKNPSCIVTPRIMLSPVSKQYMEWRLEPSFVSVLDGFVNVDINFLLPRQEIPNILGGAEDEEEEPPLPIQVFLHKYVKTHFHFSGKSFKELKMKPGQTIKFPETTLINMIPDIPKNVVQTYLEISVCHQYSFKRLIYCETFYTDMDDVQHENSVELIGLPMAAHHLTINDFNKLYHLLKPDGFLMVYDLHQSQEAFWLHSLQDALGHHTIRRDMDFHTIPEWETIFKECGFTPIFSKQPSEHELFIVFKK.

The region spanning 43–229 (IPTSLADRVL…FGIGKENIIL (187 aa)) is the Helicase ATP-binding domain. An ATP-binding site is contributed by 56-63 (SRTGSGKS). The DEAH box signature appears at 167 to 170 (DEAH). The 207-residue stretch at 253–459 (ACETALTIHK…TIKKNKEGVF (207 aa)) folds into the Helicase C-terminal domain. Residues 521-541 (GYFWQAAISDIATILAVVSVA) form a helical membrane-spanning segment.

The protein belongs to the DEAD box helicase family. DEAH subfamily.

It localises to the host membrane. The protein localises to the virion. The enzyme catalyses ATP + H2O = ADP + phosphate + H(+). The chain is Putative RNA Helicase B962L from African swine fever virus (isolate Tick/South Africa/Pretoriuskop Pr4/1996) (ASFV).